The primary structure comprises 926 residues: Ubiquitin carboxyl-terminal hydrolase 4 (926 aa).

Residues 205–328 enclose the Rhodanese domain; sequence SQMEILLIDI…WLKSNYGRQV (124 aa). The residue at position 443 (S443) is a Phosphoserine. The USP domain occupies 562-923; the sequence is VGLENLGNSC…NAYVLFYHRV (362 aa). Residue C571 is the Nucleophile of the active site. Catalysis depends on H880, which acts as the Proton acceptor.

Belongs to the peptidase C19 family. Interacts with BRO1, RFU1 and VPS32. Associates with the 26S proteasome.

It is found in the cytoplasm. It localises to the late endosome membrane. It carries out the reaction Thiol-dependent hydrolysis of ester, thioester, amide, peptide and isopeptide bonds formed by the C-terminal Gly of ubiquitin (a 76-residue protein attached to proteins as an intracellular targeting signal).. RFU1 is an inhibitor of deubiquitination activity. Ubiquitin thioesterase that acts at the late endosome/prevacuolar compartment to recover ubiquitin from ubiquitinated membrane proteins en route to the vacuole. Also removes ubiquitin from soluble proteins targeted to proteasomes. Is essential to maintain a normal level of free ubiquitin. Involved in the ammonium-induced down-regulation of the GAP1 permease and the UME3 destruction in response to oxidative stress. Has a role in the RAD9 checkpoint response to TOP1 poisons. Required for promoting coordination of DNA replication and avoids DNA overreplication. The protein is Ubiquitin carboxyl-terminal hydrolase 4 (DOA4) of Saccharomyces cerevisiae (strain RM11-1a) (Baker's yeast).